An 86-amino-acid polypeptide reads, in one-letter code: Large ribosomal subunit protein uL23 (86 aa).

This sequence belongs to the universal ribosomal protein uL23 family. Part of the 50S ribosomal subunit. Contacts protein L29.

Binds to 23S rRNA. One of the proteins that surrounds the polypeptide exit tunnel on the outside of the ribosome. The sequence is that of Large ribosomal subunit protein uL23 from Pyrococcus horikoshii (strain ATCC 700860 / DSM 12428 / JCM 9974 / NBRC 100139 / OT-3).